The following is a 364-amino-acid chain: Mannonate dehydratase (364 aa).

Belongs to the mannonate dehydratase family. Fe(2+) is required as a cofactor. Requires Mn(2+) as cofactor.

The enzyme catalyses D-mannonate = 2-dehydro-3-deoxy-D-gluconate + H2O. It participates in carbohydrate metabolism; pentose and glucuronate interconversion. Its function is as follows. Catalyzes the dehydration of D-mannonate. In Endomicrobium trichonymphae, this protein is Mannonate dehydratase.